The chain runs to 486 residues: GTPase Obg (486 aa).

The region spanning 2-159 is the Obg domain; it reads SRFIDRVVLH…RELVLELKSV (158 aa). The OBG-type G domain occupies 160 to 340; sequence ADVGLVGFPS…LTFALAKLVA (181 aa). GTP is bound by residues 166-173, 191-195, 212-215, 292-295, and 321-323; these read GFPSAGKS, FTTLV, DVPG, NKAD, and SAV. Ser173 and Thr193 together coordinate Mg(2+). The OCT domain maps to 358-438; that stretch reads PVISNENSFS…IGNVSFDWEP (81 aa). The tract at residues 462–486 is disordered; it reads RIGATERKHASRIRRGLEGLDPEDQ.

The protein belongs to the TRAFAC class OBG-HflX-like GTPase superfamily. OBG GTPase family. Monomer. The cofactor is Mg(2+).

It is found in the cytoplasm. In terms of biological role, an essential GTPase which binds GTP, GDP and possibly (p)ppGpp with moderate affinity, with high nucleotide exchange rates and a fairly low GTP hydrolysis rate. Plays a role in control of the cell cycle, stress response, ribosome biogenesis and in those bacteria that undergo differentiation, in morphogenesis control. The protein is GTPase Obg of Rhodococcus jostii (strain RHA1).